The primary structure comprises 168 residues: Small ribosomal subunit protein uS7c (168 aa).

Belongs to the universal ribosomal protein uS7 family. Part of the 30S ribosomal subunit.

The protein resides in the plastid. It is found in the chloroplast. One of the primary rRNA binding proteins, it binds directly to 16S rRNA where it nucleates assembly of the head domain of the 30S subunit. In Chlamydomonas reinhardtii (Chlamydomonas smithii), this protein is Small ribosomal subunit protein uS7c (rps7).